The chain runs to 303 residues: Exosome complex component RRP4 homolog (303 aa).

The KH domain maps to 175–213 (GILIKVPPHLIKKSKKHFHTLPYGMAVIIGCNGSVWVTP).

This sequence belongs to the RRP4 family. In terms of assembly, component of the RNA exosome complex. Ubiquitously expressed.

Its subcellular location is the nucleus. The protein resides in the nucleolus. The protein localises to the nucleoplasm. Functionally, non-catalytic component of the RNA exosome complex which has 3'-&gt;5' exoribonuclease activity and participates in a multitude of cellular RNA processing and degradation events. Involved in regulation of antisense ribosomal siRNA production. Involved in response to cold-warm shock. The chain is Exosome complex component RRP4 homolog from Caenorhabditis elegans.